We begin with the raw amino-acid sequence, 271 residues long: Probable CAAX prenyl protease 2 (271 aa).

2 consecutive transmembrane segments (helical) span residues 3–23 and 42–62; these read VYLI…TFPV and CISV…IIGP. Active-site proton donor/acceptor residues include glutamate 126 and histidine 160. The next 2 membrane-spanning stretches (helical) occupy residues 174-194 and 236-256; these read AYIA…VFGW and IYYT…GITD.

This sequence belongs to the peptidase U48 family.

The protein resides in the endoplasmic reticulum membrane. It carries out the reaction Hydrolyzes the peptide bond -P2-(S-farnesyl or geranylgeranyl)C-P1'-P2'-P3'-COOH where P1' and P2' are amino acids with aliphatic sidechains and P3' is any C-terminal residue.. In terms of biological role, protease involved in the processing of a variety of prenylated proteins containing the C-terminal CAAX motif, where C is a cysteine modified with an isoprenoid lipid, A is an aliphatic amino acid and X is any C-terminal amino acid. Proteolytically removes the C-terminal three residues of farnesylated proteins, leaving the prenylated cysteine as the new C-terminus. This Schizosaccharomyces pombe (strain 972 / ATCC 24843) (Fission yeast) protein is Probable CAAX prenyl protease 2.